The following is a 179-amino-acid chain: Large ribosomal subunit protein uL5 (179 aa).

It belongs to the universal ribosomal protein uL5 family. In terms of assembly, part of the 50S ribosomal subunit; part of the 5S rRNA/L5/L18/L25 subcomplex. Contacts the 5S rRNA and the P site tRNA. Forms a bridge to the 30S subunit in the 70S ribosome.

In terms of biological role, this is one of the proteins that bind and probably mediate the attachment of the 5S RNA into the large ribosomal subunit, where it forms part of the central protuberance. In the 70S ribosome it contacts protein S13 of the 30S subunit (bridge B1b), connecting the 2 subunits; this bridge is implicated in subunit movement. Contacts the P site tRNA; the 5S rRNA and some of its associated proteins might help stabilize positioning of ribosome-bound tRNAs. The protein is Large ribosomal subunit protein uL5 of Vibrio atlanticus (strain LGP32) (Vibrio splendidus (strain Mel32)).